The following is a 335-amino-acid chain: Erlin-2-A (335 aa).

At 1-2 (MS) the chain is on the cytoplasmic side. A helical transmembrane segment spans residues 3-23 (HAGAIVGLGVALIAAALFSAI). At 24 to 335 (HKIEEGHVGV…GLDEAASAEE (312 aa)) the chain is on the lumenal side. The N-linked (GlcNAc...) asparagine glycan is linked to N106.

It belongs to the band 7/mec-2 family.

Its subcellular location is the endoplasmic reticulum membrane. Mediates the endoplasmic reticulum-associated degradation (ERAD) of inositol 1,4,5-trisphosphate receptors (IP3Rs). Promotes sterol-accelerated ERAD of HMGCR. Involved in regulation of cellular cholesterol homeostasis by regulation the SREBP signaling pathway. The sequence is that of Erlin-2-A (erlin2-a) from Xenopus laevis (African clawed frog).